A 192-amino-acid polypeptide reads, in one-letter code: uncharacterized protein (192 aa).

This is an uncharacterized protein from Aquifex aeolicus (strain VF5).